The following is a 609-amino-acid chain: Zinc metalloproteinase/disintegrin-like HR1a (609 aa).

Positions 1-20 (MIQVLLVTICLAVFPYQGSS) are cleaved as a signal peptide. Positions 21-190 (IILGSGNVND…KKASKLVVTA (170 aa)) are excised as a propeptide. In terms of domain architecture, Peptidase M12B spans 200 to 396 (RFIELVIVAD…DEPQCILNEP (197 aa)). Residues Glu-203 and Asp-287 each coordinate Ca(2+). Asn-298 is a glycosylation site (N-linked (GlcNAc...) asparagine). Cystine bridges form between Cys-311/Cys-391, Cys-351/Cys-375, and Cys-353/Cys-358. His-336 is a Zn(2+) binding site. The active site involves Glu-337. Zn(2+) is bound by residues His-340 and His-346. Asn-350 carries an N-linked (GlcNAc...) asparagine glycan. A glycan (N-linked (GlcNAc...) asparagine) is linked at Asn-374. Ca(2+) contacts are provided by Cys-391 and Asn-394. Residues 397–400 (LRTD) constitute a propeptide that is removed on maturation. The Disintegrin domain occupies 404 to 490 (PPVCGNELLE…DCPTDRFHRN (87 aa)). Residues Val-406, Asn-409, Leu-411, Glu-413, Glu-416, and Asp-419 each coordinate Ca(2+). 22 cysteine pairs are disulfide-bonded: Cys-407/Cys-426, Cys-407/Cys-436, Cys-418/Cys-431, Cys-418/Cys-436, Cys-420/Cys-426, Cys-430/Cys-453, Cys-444/Cys-450, Cys-449/Cys-475, Cys-462/Cys-482, Cys-469/Cys-494, Cys-469/Cys-501, Cys-494/Cys-506, Cys-501/Cys-506, Cys-513/Cys-528, Cys-513/Cys-563, Cys-528/Cys-571, Cys-541/Cys-551, Cys-551/Cys-558, Cys-558/Cys-597, Cys-563/Cys-571, Cys-591/Cys-602, and Cys-597/Cys-602. The short motif at 468–470 (ECD) is the D/ECD-tripeptide element. The Ca(2+) site is built by Asp-470, Glu-473, and Asp-485. N-linked (GlcNAc...) asparagine glycosylation occurs at Asn-520.

Belongs to the venom metalloproteinase (M12B) family. P-III subfamily. P-IIIb sub-subfamily. In terms of assembly, monomer. It depends on Zn(2+) as a cofactor. Expressed by the venom gland.

The protein resides in the secreted. Functionally, zinc protease that induces hemorrhage and has proteolytic activity. Has preference for Ala, His, Pro, Met, and Tyr at the P1 position, in descending order (in vitro). Predominantly prefers Val and Asp at the P3 and P2 positions, respectively. Its function is as follows. Inhibits platelet aggregation induced by ADP, thrombin, platelet-activating factor and collagen. Acts by inhibiting fibrinogen interaction with platelet receptors alpha-IIb/beta-3 (ITGA2B/ITGB3). This Protobothrops flavoviridis (Habu) protein is Zinc metalloproteinase/disintegrin-like HR1a.